The following is an 85-amino-acid chain: Large ribosomal subunit protein bL27 (85 aa).

The segment at 1–20 is disordered; sequence MAHKKAGGSTRNGRDSESKR.

The protein belongs to the bacterial ribosomal protein bL27 family.

The polypeptide is Large ribosomal subunit protein bL27 (Yersinia pseudotuberculosis serotype O:1b (strain IP 31758)).